A 67-amino-acid chain; its full sequence is Large ribosomal subunit protein uL29 (67 aa).

It belongs to the universal ribosomal protein uL29 family.

The polypeptide is Large ribosomal subunit protein uL29 (Rubrobacter xylanophilus (strain DSM 9941 / JCM 11954 / NBRC 16129 / PRD-1)).